A 67-amino-acid chain; its full sequence is uncharacterized protein (67 aa).

Residues 1–28 (MSHVSVIAARLLVWVGILLCLGVPQLWA) form the signal peptide. An N-linked (GlcNAc...) asparagine; by host glycan is attached at Asn39.

This is an uncharacterized protein from Invertebrate iridescent virus 3 (IIV-3).